Here is a 360-residue protein sequence, read N- to C-terminus: Inward rectifier potassium channel 13 (360 aa).

At 1–50 the chain is on the cytoplasmic side; the sequence is MDSSNCKVIAPLLSQRYRRMVTKDGHSTLQMDGAQRGLAYLRDAWGILMD. The chain crosses the membrane as a helical span at residues 51 to 77; it reads MRWRWMMLVFSASFVVHWLVFAVLWYV. Topologically, residues 78–105 are extracellular; it reads LAEMNGDLELDHDAPPENHTICVKYITS. The segment at residues 106-122 is an intramembrane region (helical; Pore-forming); sequence FTAAFSFSLETQLTIGY. Residues 119-124 carry the Selectivity filter motif; the sequence is TIGYGT. Residues 123–131 lie on the Extracellular side of the membrane; sequence GTMFPSGDC. Residues 132 to 157 form a helical membrane-spanning segment; the sequence is PSAIALLAIQMLLGLMLEAFITGAFV. Topologically, residues 158–360 are cytoplasmic; that stretch reads AKIARPKNRA…FQISETGLTE (203 aa). At Ser-201 the chain carries Phosphoserine; by PKC. At Ser-287 the chain carries Phosphoserine; by PKA.

This sequence belongs to the inward rectifier-type potassium channel (TC 1.A.2.1) family. KCNJ13 subfamily. Homotetramer. Interacts with RAB28; the interaction may facilitate cone outer segments phagocytosis. In terms of processing, phosphorylation at Ser-201 by PKC strongly inhibits ionic currents, while phosphorylation at Ser-287 by PKA increases them. In terms of tissue distribution, predominantly expressed in small intestine. Expression is also detected in stomach, kidney, and all central nervous system regions tested with the exception of spinal cord.

The protein resides in the membrane. It is found in the cell membrane. The catalysed reaction is K(+)(in) = K(+)(out). With respect to regulation, inhibited by Ba(2+) and Cs(+), although sensitivity to those inhibitors is much lower than in other Kir channels. Its function is as follows. Inward rectifier potassium channels are characterized by a greater tendency to allow potassium to flow into the cell rather than out of it. Their voltage dependence is regulated by the concentration of extracellular potassium; as external potassium is raised, the voltage range of the channel opening shifts to more positive voltages. The inward rectification is mainly due to the blockage of outward current by internal magnesium. KCNJ13 has a very low single channel conductance, low sensitivity to block by external barium and cesium, and no dependence of its inward rectification properties on the internal blocking particle magnesium. The polypeptide is Inward rectifier potassium channel 13 (KCNJ13) (Homo sapiens (Human)).